A 234-amino-acid polypeptide reads, in one-letter code: HTH-type transcriptional repressor FabR (234 aa).

Residues 29-89 form the HTH tetR-type domain; that stretch reads KTRRSLVEAA…TMVDESGLML (61 aa). Residues 52 to 71 constitute a DNA-binding region (H-T-H motif); that stretch reads SLREVAREAGIAPTSFYRHF.

As to quaternary structure, homodimer.

Its subcellular location is the cytoplasm. With respect to regulation, has been suggested to require either an unsaturated acyl carrier protein or unsaturated acyl-CoA (but not their saturated equivalents) for DNA-binding. Another group suggests that unsaturated thioesters are not essential but act instead to enhance DNA-binding. Binds the promoter region of at least fabA and fabB, but probably not yqfA. Represses the transcription of fabA and fabB, involved in unsaturated fatty acid (UFA) biosynthesis. By controlling UFA production, FabR directly influences the physical properties of the membrane bilayer. In Escherichia coli (strain K12), this protein is HTH-type transcriptional repressor FabR.